Consider the following 1035-residue polypeptide: MGDQRPQDRPSSPGMDSTPWYCDKPPSKYFAKRKHRRLRFPPVDTQNWVFVTEGMDDFRYGCQSPEDTLVCRRDEFLLPKISLRGPQADPKSRKKKLLKKAALFSKLSPAQPARKAFVEEVEAQLMTKHPLAMYPNLGEDMPPDLLLQVLKPLDPERKLEDAGSCEGQEKTTDEPTEPGKYPCGEFSPRPPETRVSCLPPEPPKTPVSSLRPEPPETGVSHLRPQPPKTQVSSLHLEPPETGVSHLRPEPPKTQVSSLHLEPPETGVSHLYLEPPGTGVSHLCPEPPKTRVSHLHREPPETGVPDLCLEPPKSRVSHLRPEPSETGVSHLHPEPPKTLVSSLHPEPPETGVSHLCPEPPETRVSPLRQLPPEAGVSHLCPEPPKTRVPPLRPETPKNGVSPLFPEPPKTRISNLRSEPPKIGVSHLCLEPPKTRGSHLRPEPPETGVSHLRPEPPKTRVSSLHLEPPETGVSHLCPEPPEKDVSHLRPEPPDTGVSHLCPEPPKTRVSHLRPEPSETGVSHLRPEPPKILVSSLHQAPPESSVSHLRPEPPETGVSHLRPEPPKTRMYSLRPEPPDTGVSHLCPEPPKTRVSSLPPEPPETGVSHLCPEPPETRVSHLRPEPPETGVSHLRPEPPKTRMYSLRPEPPNTGVSHLCPEPPKTRVSSLPPEPPETGVSHLCPEPPETRVSHLRPEPPETGVSRLHPEPPKTRVSSLHAEPPESRVSHLCPEPPETGVSHLRPEPPKPRVSSLRPEPLETRVSHLRPEPPETGVSHLHPELPKPRVSSLHLEPPKTRRVSSLRLEPPKTGRVSSLCPEPTKTGASHLKELFQEGTSSTMECVSDSLQRRHTSRKLRDFKWAGDLGVNEESISSLFDFTPECRATYQDQKNKKANECSSGLKYSMELDEMDEVKFFSQEKDLDGKIQNAPNSHSAQHVKMGYGAWYLKPKLGKKLRSDEPLIDPKLVLEKPDEPDILDGLYGPIAFKDFILSKGYEMPGIIQRLFARRGWTYDSVKTPIQRAMQVYKYKEDVTDASEED.

Disordered regions lie at residues 1-21 and 159-797; these read MGDQ…TPWY and LEDA…RRVS. A compositionally biased stretch (basic and acidic residues) spans 159–173; sequence LEDAGSCEGQEKTTD. Positions 380 to 392 are enriched in pro residues; the sequence is PEPPKTRVPPLRP. Residues 478–490 are compositionally biased toward basic and acidic residues; sequence PPEKDVSHLRPEP. Positions 533 to 544 are enriched in polar residues; it reads SLHQAPPESSVS. Basic and acidic residues-rich tracts occupy residues 611-622, 683-694, and 753-766; these read PETRVSHLRPEP and EPLE…RPEP.

This sequence belongs to the FAM47 family.

This chain is Putative protein FAM47C (FAM47C), found in Homo sapiens (Human).